Consider the following 343-residue polypeptide: NADH-ubiquinone oxidoreductase chain 2 (343 aa).

Transmembrane regions (helical) follow at residues 1 to 21 (MNPMSWLIITTSIALSTTMIT), 59 to 81 (YYLIQTMASTSMLFAATTNALNT), 96 to 116 (TIITLALMMKMAAAPFHSWLP), 150 to 170 (NITLILLSAMLSITMGGLGSL), 178 to 198 (LMAFSSIAHTGWIMATITMAP), 200 to 220 (ISTLTFTIYIMTTIPTFLLIN), 241 to 261 (MTILSMTILSMGGLPPLSGFM), and 270 to 290 (LISMNMITEATLMAMASLLSL).

This sequence belongs to the complex I subunit 2 family.

Its subcellular location is the mitochondrion inner membrane. The catalysed reaction is a ubiquinone + NADH + 5 H(+)(in) = a ubiquinol + NAD(+) + 4 H(+)(out). Its function is as follows. Core subunit of the mitochondrial membrane respiratory chain NADH dehydrogenase (Complex I) that is believed to belong to the minimal assembly required for catalysis. Complex I functions in the transfer of electrons from NADH to the respiratory chain. The immediate electron acceptor for the enzyme is believed to be ubiquinone. This chain is NADH-ubiquinone oxidoreductase chain 2 (MT-ND2), found in Lycodon semicarinatus (Ryukyu odd-tooth snake).